The primary structure comprises 426 residues: MSEILSVKAREILDSRGNPTVEAEVILDSGYSGTAAVPSGASTGSREALELRDGDPARYLGKGVLQAVQNVNDEIAPKVIGMDGRDQVGLDSFLIELDGTENKGRLGANAILSVSMAAAKAAAAECELPLYRYLGGAMASLLPVPMMNVINGGAHADNNVDIQEFMIVPAGAPTFGEALRMGAETFHNLKKVLKSKGLNTAVGDEGGFAPNLSSNEEAMEVLMQAIEAAGYRPGEDIYIAIDAAASEFYKDGSYHMSAEQSPTKSAEEMIAFYEAWAGRYPLICIEDGMAEGDWGGWQALTRKLGYNVQLVGDDVFVTNTSIIAKGIADGVANSVLIKLNQIGTVTETLQAINMAFKAGYTVVISHRSGETEDTTIADLAVATNAGQIKTGSLSRSERIAKYNQLLRIEEELGASGCYAGMSAFRV.

Position 163 (Gln163) interacts with (2R)-2-phosphoglycerate. Catalysis depends on Glu205, which acts as the Proton donor. Positions 242, 286, and 313 each coordinate Mg(2+). (2R)-2-phosphoglycerate-binding residues include Lys338, Arg367, Ser368, and Lys389. Lys338 functions as the Proton acceptor in the catalytic mechanism.

The protein belongs to the enolase family. Requires Mg(2+) as cofactor.

The protein resides in the cytoplasm. It localises to the secreted. Its subcellular location is the cell surface. It catalyses the reaction (2R)-2-phosphoglycerate = phosphoenolpyruvate + H2O. It functions in the pathway carbohydrate degradation; glycolysis; pyruvate from D-glyceraldehyde 3-phosphate: step 4/5. In terms of biological role, catalyzes the reversible conversion of 2-phosphoglycerate (2-PG) into phosphoenolpyruvate (PEP). It is essential for the degradation of carbohydrates via glycolysis. The protein is Enolase of Syntrophobacter fumaroxidans (strain DSM 10017 / MPOB).